Here is a 609-residue protein sequence, read N- to C-terminus: Alpha-glycerophosphate oxidase (609 aa).

21 to 49 (DLLVIGGGITGAGLTLQAAAAGMKVAVLE) contributes to the FAD binding site.

It belongs to the FAD-dependent glycerol-3-phosphate dehydrogenase family. It depends on FAD as a cofactor.

Its subcellular location is the cytoplasm. It carries out the reaction sn-glycerol 3-phosphate + O2 = dihydroxyacetone phosphate + H2O2. The polypeptide is Alpha-glycerophosphate oxidase (glpO) (Lactococcus lactis subsp. lactis (strain IL1403) (Streptococcus lactis)).